The primary structure comprises 389 residues: Glutamate 5-kinase (389 aa).

An ATP-binding site is contributed by Lys16. Positions 56, 143, and 155 each coordinate substrate. 175-176 (SD) contacts ATP. Residues 281–358 (AGELHVDEGA…AEIEAILGYA (78 aa)) form the PUA domain.

It belongs to the glutamate 5-kinase family.

Its subcellular location is the cytoplasm. The catalysed reaction is L-glutamate + ATP = L-glutamyl 5-phosphate + ADP. It participates in amino-acid biosynthesis; L-proline biosynthesis; L-glutamate 5-semialdehyde from L-glutamate: step 1/2. Its function is as follows. Catalyzes the transfer of a phosphate group to glutamate to form L-glutamate 5-phosphate. The protein is Glutamate 5-kinase of Rhizobium etli (strain ATCC 51251 / DSM 11541 / JCM 21823 / NBRC 15573 / CFN 42).